Reading from the N-terminus, the 162-residue chain is UPF0303 protein Arad_3071 (162 aa).

This sequence belongs to the UPF0303 family.

This Rhizobium rhizogenes (strain K84 / ATCC BAA-868) (Agrobacterium radiobacter) protein is UPF0303 protein Arad_3071.